The primary structure comprises 1058 residues: Carbamoyl phosphate synthase pyrimidine-specific large chain (1058 aa).

The interval 1-401 (MPKRTDIHKI…ATLKAVRSLE (401 aa)) is carboxyphosphate synthetic domain. ATP contacts are provided by Arg-129, Arg-169, Gly-175, Gly-176, Gln-208, Ile-210, Glu-215, Gly-241, Ile-242, His-243, Gln-284, and Glu-298. An ATP-grasp 1 domain is found at 133–327 (KALMEELGEP…IAKMAAKIAV (195 aa)). Gln-284, Glu-298, and Asn-300 together coordinate Mg(2+). Residues Gln-284, Glu-298, and Asn-300 each coordinate Mn(2+). Residues 402 to 546 (IGVHHVEEPA…YGTYEFENES (145 aa)) form an oligomerization domain region. The segment at 547–929 (IVTKRPSVLV…ALYKAFEAAK (383 aa)) is carbamoyl phosphate synthetic domain. The region spanning 671 to 861 (DKVIKALAIP…MAQVATRAIL (191 aa)) is the ATP-grasp 2 domain. ATP-binding residues include Arg-707, Ser-746, Leu-748, Glu-752, Gly-777, Val-778, His-779, Ser-780, Gln-820, and Glu-832. Mg(2+) is bound by residues Gln-820, Glu-832, and Asn-834. Mn(2+) is bound by residues Gln-820, Glu-832, and Asn-834. The 129-residue stretch at 930–1058 (LHVPSHGNVL…ESQSFVTQAL (129 aa)) folds into the MGS-like domain. An allosteric domain region spans residues 930-1058 (LHVPSHGNVL…ESQSFVTQAL (129 aa)).

It belongs to the CarB family. In terms of assembly, composed of two chains; the small (or glutamine) chain promotes the hydrolysis of glutamine to ammonia, which is used by the large (or ammonia) chain to synthesize carbamoyl phosphate. Tetramer of heterodimers (alpha,beta)4. It depends on Mg(2+) as a cofactor. Mn(2+) is required as a cofactor.

The catalysed reaction is hydrogencarbonate + L-glutamine + 2 ATP + H2O = carbamoyl phosphate + L-glutamate + 2 ADP + phosphate + 2 H(+). It carries out the reaction hydrogencarbonate + NH4(+) + 2 ATP = carbamoyl phosphate + 2 ADP + phosphate + 2 H(+). Its pathway is amino-acid biosynthesis; L-arginine biosynthesis; carbamoyl phosphate from bicarbonate: step 1/1. It functions in the pathway pyrimidine metabolism; UMP biosynthesis via de novo pathway; (S)-dihydroorotate from bicarbonate: step 1/3. In terms of biological role, small subunit of the glutamine-dependent carbamoyl phosphate synthetase (CPSase). CPSase catalyzes the formation of carbamoyl phosphate from the ammonia moiety of glutamine, carbonate, and phosphate donated by ATP, constituting the first step of the biosynthetic pathway leading to pyrimidine nucleotides. The large subunit (synthetase) binds the substrates ammonia (free or transferred from glutamine from the small subunit), hydrogencarbonate and ATP and carries out an ATP-coupled ligase reaction, activating hydrogencarbonate by forming carboxy phosphate which reacts with ammonia to form carbamoyl phosphate. This chain is Carbamoyl phosphate synthase pyrimidine-specific large chain (pyrAB), found in Lactiplantibacillus plantarum (strain ATCC BAA-793 / NCIMB 8826 / WCFS1) (Lactobacillus plantarum).